A 461-amino-acid chain; its full sequence is Photosystem II CP43 reaction center protein (461 aa).

Residues 1-48 (MVTLSSNSIFATNRDQESSGFAWWAGNARLINLSGKLLGAHVAHAGLI) are Cytoplasmic-facing. The helical transmembrane segment at 49–71 (VFWAGAMTLFELAHFIPEKPMYE) threads the bilayer. Over 72 to 111 (QGLILIPHIATLGWGVGPGGEVVDTFPFFVVGVVHLISSA) the chain is Lumenal. The chain crosses the membrane as a helical span at residues 112-133 (VLGFGGVYHAIRGPETLEEYSS). Topologically, residues 134–155 (FFGYDWKDKNKMTTILGFHLIV) are cytoplasmic. A helical transmembrane segment spans residues 156–178 (LGIGALLLVAKAMFFGGLYDTWA). At 179–232 (PGGGDVRVITNPTLDPRVIFGYLLKSPFGGEGWIVSVNNLEDVVGGHIWIGLIC) the chain is on the lumenal side. The chain crosses the membrane as a helical span at residues 233–253 (IAGGIWHILTTPFGWARRAFI). The Cytoplasmic segment spans residues 254 to 268 (WSGEAYLSYSLGALS). The helical transmembrane segment at 269 to 289 (MMGFIATCFVWFNNTVYPSEF) threads the bilayer. Topologically, residues 290-424 (YGPTGPEASQ…ATSHFVLAFF (135 aa)) are lumenal. A [CaMn4O5] cluster-binding site is contributed by Glu-355. The chain crosses the membrane as a helical span at residues 425-449 (FLVGHLWHAGRARAAAAGFEKGIDR). Topologically, residues 450-461 (ESEPVLSMPSLD) are cytoplasmic.

PSII is composed of 1 copy each of membrane proteins PsbA, PsbB, PsbC, PsbD, PsbE, PsbF, PsbH, PsbI, PsbJ, PsbK, PsbL, PsbM, PsbT, PsbX, PsbY, PsbZ, Psb30/Ycf12, peripheral proteins PsbO, CyanoQ (PsbQ), PsbU, PsbV and a large number of cofactors. It forms dimeric complexes. Part of a photosystem II (PSII) assembly intermediate complex PSII-I; crystallized from a strain deleted of psbJ, it forms monomeric PSII before addition of the oxygen evolving complex. PSII-I includes 3 assembly factors not found in mature PSII (Psb27, Psb28 and Psb34), and CP43 (this protein) is not in its mature conformation. Binds multiple chlorophylls and provides some of the ligands for the Ca-4Mn-5O cluster of the oxygen-evolving complex. It may also provide a ligand for a Cl- that is required for oxygen evolution. PSII binds additional chlorophylls, carotenoids and specific lipids. serves as cofactor.

The protein localises to the cellular thylakoid membrane. In terms of biological role, one of the components of the core complex of photosystem II (PSII). It binds chlorophyll and helps catalyze the primary light-induced photochemical processes of PSII. PSII is a light-driven water:plastoquinone oxidoreductase, using light energy to abstract electrons from H(2)O, generating O(2) and a proton gradient subsequently used for ATP formation. This Thermosynechococcus vestitus (strain NIES-2133 / IAM M-273 / BP-1) protein is Photosystem II CP43 reaction center protein.